Reading from the N-terminus, the 278-residue chain is HTH-type transcriptional activator RhaS (278 aa).

In terms of domain architecture, HTH araC/xylS-type spans 174–272; sequence NLLLAWLEDH…NWSPRDIRQG (99 aa). DNA-binding regions (H-T-H motif) lie at residues 191 to 212 and 239 to 262; these read DAVAEQFSLSLRTLHRQLKQQT and VTDIAYRCGFSDSNHFSTLFRREF.

Binds DNA as a dimer.

The protein localises to the cytoplasm. Its function is as follows. Activates expression of the rhaBAD and rhaT operons. This Escherichia coli O139:H28 (strain E24377A / ETEC) protein is HTH-type transcriptional activator RhaS.